Reading from the N-terminus, the 617-residue chain is Vacuolar protein sorting-associated protein 33A (617 aa).

Positions 268-287 (NFPSDGALPGGGGSGPRVEE) are disordered.

It belongs to the STXBP/unc-18/SEC1 family. Component of the class C core vacuole/endosome tethering (CORVET) complex composed of at least Vps8, dor/Vps18, car/Vps33A and Vps16A; unlike in other species, Vps11 is not part of the Drosophila complex. Due to the reduced number of components the Drosophila CORVET complex is often referred to as the miniCORVET complex. Interacts with ema. Component of the homotypic fusion and vacuole protein sorting (HOPS) complex, composed of Vps16A, car/Vps33A, dor/Vps18, Vps39, Vps11 and lt/Vps41. The tethering complex core made up of Vps16A, car/Vps33A and dor/Vps18 and shared by both HOPS and CORVET, preferentially associates with CORVET specific Vps8 over HOPS specific lt/Vps41. Interacts with Syx17 (via SNARE domain); the interaction requires Vps16A, may involve additional components of the HOPS complex and may promote assembly of the Syx17-Snap29-Vamp7 trans-SNARE complex.

Its subcellular location is the early endosome. The protein localises to the late endosome membrane. It is found in the lysosome membrane. Core component of the class C core vacuole/endosome tethering (CORVET) and the homotypic fusion and vacuole protein sorting (HOPS) tethering complexes involved in endo-lysosomal vesicle trafficking and lysosome biogenesis. The CORVET complex facilitates docking and fusion of endosomal vesicles during endosome maturation, acts upstream of HOPS, but is not involved in autophagic flux. The CORVET complex may cooperate with the early endosomal tether Rbsn-5 to mediate endosomal fusion. The HOPS complex facilitates docking and fusion of lysosomes with late endosomes and several other types of vesicles. The HOPS complex is also involved in autophagy and crinophagy (the elimination of unused secretory granules through their fusion with lysosomes). The HOPS complex probably instigates autophagosome-lysosome fusion by binding autophagosome associated Syx17/syntaxin 17 and promoting assembly of the trans-SNARE complex. Independent of Syx17/syntaxin 17 HOPS is involved in biosynthetic transport to lysosomes and lysosome-related organelles such as eye-pigment granules. Required for endocytic degradation of boss/bride of sevenless and N/Notch in developing ommatidia. This Drosophila melanogaster (Fruit fly) protein is Vacuolar protein sorting-associated protein 33A.